The primary structure comprises 655 residues: Proprotein convertase subtilisin/kexin type 4 (655 aa).

The N-terminal stretch at 1–26 is a signal peptide; sequence MRPSQTELWLGLTLTLALLAVRWASA. Residues 27 to 110 constitute a propeptide that is removed on maturation; the sequence is QAPIYVSSWA…QQTLRRRVKR (84 aa). Residues 123–437 form the Peptidase S8 domain; that stretch reads QWYMNKEIQQ…YGLLDAGLLV (315 aa). Residues Asp155, His196, and Ser370 each act as charge relay system in the active site. One can recognise a P/Homo B domain in the interval 446-580; sequence TKPQKKCAIR…TLLLYGTAED (135 aa). N-linked (GlcNAc...) asparagine glycosylation is present at Asn472.

It belongs to the peptidase S8 family. Furin subfamily. In terms of assembly, the proPCSK4 form interacts with HSPA5; the interaction takes place at the endoplasmic reticulum. N-glycosylated. Post-translationally, synthesized in the endoplasmic reticulum as a zymogen, is matured by autocatalytic cleavage between the prodomain and the catalytic domain. In terms of tissue distribution, expressed abundantly in the testis since postnatal Day 16. In testis, strongly detected in round and elongated spermatids as well as spermatocytes. Also observed in residual bodies engulfed by Sertoli cells at spermatogenic stages VIII and IX. In ovaries, expressed in macrophage-like cells of the ovarian theca, interstitium and corpora lutea.

The protein localises to the cytoplasmic vesicle. Its subcellular location is the secretory vesicle. The protein resides in the acrosome membrane. Functionally, proprotein convertase involved in the processing of hormone and other protein precursors at sites comprised of pairs of basic amino acid residues. In males, important for ADAM2 processing as well as other acrosomal proteins with roles in fertilization and critical for normal fertilization events such as sperm capacitation, acrosome reaction and binding of sperm to zona pellucida. Also plays a role in female fertility, involved in the regulation of trophoblast migration and placental development, may be through the proteolytical processing and activation of proteins such as IGF2. May also participate in folliculogenesis in the ovaries. The chain is Proprotein convertase subtilisin/kexin type 4 (Pcsk4) from Mus musculus (Mouse).